A 309-amino-acid polypeptide reads, in one-letter code: Large ribosomal subunit protein mL45 (309 aa).

This sequence belongs to the mitochondrion-specific ribosomal protein mL45 family. As to quaternary structure, component of the mitochondrial ribosome large subunit (39S) which comprises a 16S rRNA and about 50 distinct proteins.

It localises to the mitochondrion. Its function is as follows. Component of the mitochondrial large ribosomal subunit (mt-LSU). Within the mitochondrial ribosomes, required to direct the nascent polypeptide toward the tunnel exit and position the exit at a distance from the membrane surface. The chain is Large ribosomal subunit protein mL45 (mrpl45) from Xenopus tropicalis (Western clawed frog).